Reading from the N-terminus, the 465-residue chain is Ribosomal oxygenase 2 (465 aa).

One can recognise a JmjC domain in the interval 139–271; the sequence is QPQRYKDELW…NSWGDCLLDS (133 aa). Histidine 179, aspartate 181, and histidine 240 together coordinate Fe cation. Residue serine 309 is modified to Phosphoserine.

Belongs to the ROX family. MINA53 subfamily. The cofactor is Fe(2+). As to expression, predominantly expressed in testis. Expressed at high levels in spleen, thymus, and colon, but barely detectable in brain, skeletal muscle, and seminal vesicle (at protein level).

It localises to the nucleus. The protein localises to the nucleolus. The catalysed reaction is L-histidyl-[ribosomal protein uL15] + 2-oxoglutarate + O2 = (3S)-3-hydroxy-L-histidyl-[ribosomal protein uL15] + succinate + CO2. The enzyme catalyses L-histidyl-[protein] + 2-oxoglutarate + O2 = (3S)-3-hydroxy-L-histidyl-[protein] + succinate + CO2. Its function is as follows. Oxygenase that can act as both a histone lysine demethylase and a ribosomal histidine hydroxylase. Is involved in the demethylation of trimethylated 'Lys-9' on histone H3 (H3K9me3), leading to an increase in ribosomal RNA expression. Also catalyzes the hydroxylation of 60S ribosomal protein L27a on 'His-39'. May play an important role in cell growth and survival. May be involved in ribosome biogenesis, most likely during the assembly process of pre-ribosomal particles. The chain is Ribosomal oxygenase 2 from Mus musculus (Mouse).